Here is a 399-residue protein sequence, read N- to C-terminus: 26S proteasome regulatory subunit S10B homolog B (399 aa).

180 to 187 lines the ATP pocket; sequence GPPGTGKT. A Glycyl lysine isopeptide (Lys-Gly) (interchain with G-Cter in ubiquitin) cross-link involves residue Lys203.

This sequence belongs to the AAA ATPase family. In terms of assembly, component of the 19S regulatory particle (RP/PA700) base subcomplex of the 26S proteasome. The 26S proteasome is composed of a core protease (CP), known as the 20S proteasome, capped at one or both ends by the 19S regulatory particle (RP/PA700). The RP/PA700 complex is composed of at least 17 different subunits in two subcomplexes, the base and the lid, which form the portions proximal and distal to the 20S proteolytic core, respectively.

The protein localises to the cytoplasm. Its subcellular location is the nucleus. The 26S proteasome is involved in the ATP-dependent degradation of ubiquitinated proteins. The regulatory (or ATPase) complex confers ATP dependency and substrate specificity to the 26S complex. The protein is 26S proteasome regulatory subunit S10B homolog B (RPT4B) of Arabidopsis thaliana (Mouse-ear cress).